The following is a 141-amino-acid chain: Large ribosomal subunit protein uL11 (141 aa).

Belongs to the universal ribosomal protein uL11 family. In terms of assembly, part of the ribosomal stalk of the 50S ribosomal subunit. Interacts with L10 and the large rRNA to form the base of the stalk. L10 forms an elongated spine to which L12 dimers bind in a sequential fashion forming a multimeric L10(L12)X complex. One or more lysine residues are methylated.

Its function is as follows. Forms part of the ribosomal stalk which helps the ribosome interact with GTP-bound translation factors. The sequence is that of Large ribosomal subunit protein uL11 from Roseiflexus castenholzii (strain DSM 13941 / HLO8).